The primary structure comprises 76 residues: Envelope small membrane protein (76 aa).

At 1–14 the chain is on the virion surface side; it reads MLQLVNDNGLVVNV. Residues 15–35 traverse the membrane as a helical segment; the sequence is ILWLFVLFFLLIISITFVQLV. Residues 36–76 lie on the Intravirion side of the membrane; that stretch reads NLCFTCHRLCNSAVYTPIGRLYRVYKSYMRIDPLPSTVIDV.

This sequence belongs to the alphacoronaviruses E protein family. Homopentamer. Interacts with membrane protein M in the budding compartment of the host cell, which is located between endoplasmic reticulum and the Golgi complex. Interacts with Nucleoprotein. Interacts with host IRF3; this interaction inhibits type I IFN production.

It localises to the host Golgi apparatus membrane. The protein resides in the host endoplasmic reticulum. Plays a central role in virus morphogenesis and assembly. Acts as a viroporin and self-assembles in host membranes forming pentameric protein-lipid pores that allow ion transport. Also plays a role in the induction of apoptosis. Counteracts the production of type I interferon by interacting with host IRF3 component and preventing its translocation to the host nucleus. In Sus scrofa (Pig), this protein is Envelope small membrane protein.